The following is a 207-amino-acid chain: Dephospho-CoA kinase (207 aa).

The 196-residue stretch at 12 to 207 folds into the DPCK domain; that stretch reads LIGITGMIGG…LYSTLLGKML (196 aa). 20-25 serves as a coordination point for ATP; that stretch reads GGGKST.

Belongs to the CoaE family.

The protein resides in the cytoplasm. It catalyses the reaction 3'-dephospho-CoA + ATP = ADP + CoA + H(+). The protein operates within cofactor biosynthesis; coenzyme A biosynthesis; CoA from (R)-pantothenate: step 5/5. Catalyzes the phosphorylation of the 3'-hydroxyl group of dephosphocoenzyme A to form coenzyme A. This chain is Dephospho-CoA kinase, found in Leptospira interrogans serogroup Icterohaemorrhagiae serovar copenhageni (strain Fiocruz L1-130).